Reading from the N-terminus, the 262-residue chain is Transmembrane protein 81 (262 aa).

The N-terminal stretch at 1–30 is a signal peptide; sequence MKAVATVFICGSLVLITYLPLVVTSPQTLA. Residues 31 to 225 lie on the Extracellular side of the membrane; sequence IPEKLRQAVG…HLPGWRKKVS (195 aa). The N-linked (GlcNAc...) asparagine glycan is linked to N45. Residues 83-171 form the Ig-like domain; sequence TNWICGMLHF…VQQLKNLKLV (89 aa). Cysteines 104 and 160 form a disulfide. A glycan (N-linked (GlcNAc...) asparagine) is linked at N211. Residues 226-246 traverse the membrane as a helical segment; sequence LALGVGIAAGVVGGVLVNVAL. The Cytoplasmic segment spans residues 247–262; sequence CRVLGGTGGNGNLSSL.

Forms a complex with IZUMO1 and SPACA6 on spermatocyte cell membrane required for fertilization.

Its subcellular location is the cell membrane. In terms of biological role, essential fertilization factor required for male fertility. Part of a conserved trimeric sperm complex with the essential fertilization factors IZUMO1 and SPACA6 which bridges sperm and oocyte membranes during fertilization by binding to IZUMO1R/JUNO on the oocyte. The protein is Transmembrane protein 81 (Tmem81) of Rattus norvegicus (Rat).